The following is a 154-amino-acid chain: Myoglobin (154 aa).

A Globin domain is found at 2-148 (GLSDGEWQLV…FRNDMAAKYK (147 aa)). Residue Ser4 is modified to Phosphoserine. His65 lines the nitrite pocket. His65 is an O2 binding site. Thr68 carries the post-translational modification Phosphothreonine. Heme b is bound at residue His94.

It belongs to the globin family. Monomeric.

The protein resides in the cytoplasm. The protein localises to the sarcoplasm. The enzyme catalyses Fe(III)-heme b-[protein] + nitric oxide + H2O = Fe(II)-heme b-[protein] + nitrite + 2 H(+). The catalysed reaction is H2O2 + AH2 = A + 2 H2O. Its function is as follows. Monomeric heme protein which primary function is to store oxygen and facilitate its diffusion within muscle tissues. Reversibly binds oxygen through a pentacoordinated heme iron and enables its timely and efficient release as needed during periods of heightened demand. Depending on the oxidative conditions of tissues and cells, and in addition to its ability to bind oxygen, it also has a nitrite reductase activity whereby it regulates the production of bioactive nitric oxide. Under stress conditions, like hypoxia and anoxia, it also protects cells against reactive oxygen species thanks to its pseudoperoxidase activity. The protein is Myoglobin (MB) of Sus scrofa (Pig).